We begin with the raw amino-acid sequence, 366 residues long: tRNA/tmRNA (uracil-C(5))-methyltransferase (366 aa).

Residues Q190, Y218, N223, E239, and D299 each contribute to the S-adenosyl-L-methionine site. Residue C324 is the Nucleophile of the active site. The Proton acceptor role is filled by E358.

It belongs to the class I-like SAM-binding methyltransferase superfamily. RNA M5U methyltransferase family. TrmA subfamily.

The enzyme catalyses uridine(54) in tRNA + S-adenosyl-L-methionine = 5-methyluridine(54) in tRNA + S-adenosyl-L-homocysteine + H(+). It catalyses the reaction uridine(341) in tmRNA + S-adenosyl-L-methionine = 5-methyluridine(341) in tmRNA + S-adenosyl-L-homocysteine + H(+). Its function is as follows. Dual-specificity methyltransferase that catalyzes the formation of 5-methyluridine at position 54 (m5U54) in all tRNAs, and that of position 341 (m5U341) in tmRNA (transfer-mRNA). The protein is tRNA/tmRNA (uracil-C(5))-methyltransferase of Salmonella paratyphi C (strain RKS4594).